The sequence spans 406 residues: Peptidase T (406 aa).

H78 lines the Zn(2+) pocket. D80 is a catalytic residue. D139 lines the Zn(2+) pocket. The active-site Proton acceptor is the E173. Residues E174, D196, and H378 each contribute to the Zn(2+) site.

The protein belongs to the peptidase M20B family. Zn(2+) is required as a cofactor.

Its subcellular location is the cytoplasm. The enzyme catalyses Release of the N-terminal residue from a tripeptide.. Functionally, cleaves the N-terminal amino acid of tripeptides. In Clostridium perfringens (strain SM101 / Type A), this protein is Peptidase T.